Reading from the N-terminus, the 458-residue chain is 3-isopropylmalate dehydratase large subunit (458 aa).

[4Fe-4S] cluster-binding residues include Cys-337, Cys-397, and Cys-400.

This sequence belongs to the aconitase/IPM isomerase family. LeuC type 1 subfamily. As to quaternary structure, heterodimer of LeuC and LeuD. [4Fe-4S] cluster is required as a cofactor.

It catalyses the reaction (2R,3S)-3-isopropylmalate = (2S)-2-isopropylmalate. It functions in the pathway amino-acid biosynthesis; L-leucine biosynthesis; L-leucine from 3-methyl-2-oxobutanoate: step 2/4. Functionally, catalyzes the isomerization between 2-isopropylmalate and 3-isopropylmalate, via the formation of 2-isopropylmaleate. The sequence is that of 3-isopropylmalate dehydratase large subunit from Leuconostoc mesenteroides subsp. mesenteroides (strain ATCC 8293 / DSM 20343 / BCRC 11652 / CCM 1803 / JCM 6124 / NCDO 523 / NBRC 100496 / NCIMB 8023 / NCTC 12954 / NRRL B-1118 / 37Y).